The sequence spans 210 residues: MADS-box protein AGL42 (210 aa).

Residues 1-61 enclose the MADS-box domain; it reads MVRGKIEMKK…GRLYEFSSSD (61 aa). One can recognise a K-box domain in the interval 87–177; sequence LQQLKQEASH…HQKNVINPWR (91 aa).

As to expression, expressed in quiescent center (QC) cells of root tips. Expressed at the base of the petiole of cotyledons and leaves, in flower buds, petals, sepals and abscission zone of flowers and siliques.

The protein resides in the nucleus. Functionally, MADS-box transcription factor that acts with AGL71 and AGL72 in the control of flowering time. Promotes flowering at the shoot apical and axillary meristems. Seems to act through a gibberellin-dependent pathway. Interacts genetically with SOC1 and its expression is directly regulated by SOC1. Plays a role in controlling flower organ senescence and abscission by repressing ethylene responses and regulating the expression of BOP2 and IDA. This is MADS-box protein AGL42 (AGL42) from Arabidopsis thaliana (Mouse-ear cress).